We begin with the raw amino-acid sequence, 37 residues long: Large ribosomal subunit protein bL36 (37 aa).

The protein belongs to the bacterial ribosomal protein bL36 family.

The chain is Large ribosomal subunit protein bL36 from Nitratidesulfovibrio vulgaris (strain ATCC 29579 / DSM 644 / CCUG 34227 / NCIMB 8303 / VKM B-1760 / Hildenborough) (Desulfovibrio vulgaris).